Reading from the N-terminus, the 742-residue chain is Probable serine/threonine-protein kinase PkwA (742 aa).

Residues 16 to 266 (YRLVSRLGAG…TAELLAQLST (251 aa)) enclose the Protein kinase domain. ATP is bound by residues 22–30 (LGAGGMGQV) and Lys44. Asp138 acts as the Proton acceptor in catalysis. The segment at 266-394 (TDHTGDDWPP…PWSPPRVQPP (129 aa)) is disordered. Residues 301-318 (EPPPPSHGPPRPSEPLPD) are compositionally biased toward pro residues. A compositionally biased stretch (basic and acidic residues) spans 343–356 (LEEKPIQVIHEPER). Positions 377–392 (PRPAAPQPPWSPPRVQ) are enriched in pro residues. WD repeat units lie at residues 455–496 (ILTT…ELHT), 497–538 (LEGH…ERAV), 539–580 (FEGH…EHAV), 581–621 (LKGH…KERD), 622–663 (VLQA…ALHT), 664–705 (FEGH…EHTT), and 706–742 (LEGHTEPVHSVAFHPEGTTLASASEDGTIRIWPIATE).

The protein belongs to the protein kinase superfamily. Ser/Thr protein kinase family.

The enzyme catalyses L-seryl-[protein] + ATP = O-phospho-L-seryl-[protein] + ADP + H(+). The catalysed reaction is L-threonyl-[protein] + ATP = O-phospho-L-threonyl-[protein] + ADP + H(+). Functionally, may play a regulatory role during the complex growth cycle and in secondary metabolite production. This is Probable serine/threonine-protein kinase PkwA (pkwA) from Thermomonospora curvata.